The sequence spans 131 residues: MKTVQVNIVTPDGPVYQADVEMVSVRAESGELGILAGHVPMVAPLKIGAVRLKHSGSTELVAVSGGFVEVRPEQVTILAQAAETSDKVDVDRAKSAKQRAEEHLNHPNESDVRRAELALKRALNRLNVAGK.

The protein belongs to the ATPase epsilon chain family. F-type ATPases have 2 components, CF(1) - the catalytic core - and CF(0) - the membrane proton channel. CF(1) has five subunits: alpha(3), beta(3), gamma(1), delta(1), epsilon(1). CF(0) has three main subunits: a, b and c.

It localises to the cell membrane. In terms of biological role, produces ATP from ADP in the presence of a proton gradient across the membrane. The chain is ATP synthase epsilon chain from Bacillus pumilus (strain SAFR-032).